The primary structure comprises 427 residues: 3-phosphoshikimate 1-carboxyvinyltransferase (427 aa).

3-phosphoshikimate-binding residues include lysine 22, serine 23, and arginine 27. Position 22 (lysine 22) interacts with phosphoenolpyruvate. The phosphoenolpyruvate site is built by glycine 96 and arginine 124. Positions 169, 170, 171, 197, 313, 336, and 340 each coordinate 3-phosphoshikimate. Glutamine 171 is a binding site for phosphoenolpyruvate. Aspartate 313 functions as the Proton acceptor in the catalytic mechanism. Residues arginine 344, arginine 386, and lysine 411 each contribute to the phosphoenolpyruvate site.

The protein belongs to the EPSP synthase family. As to quaternary structure, monomer.

It is found in the cytoplasm. It carries out the reaction 3-phosphoshikimate + phosphoenolpyruvate = 5-O-(1-carboxyvinyl)-3-phosphoshikimate + phosphate. The protein operates within metabolic intermediate biosynthesis; chorismate biosynthesis; chorismate from D-erythrose 4-phosphate and phosphoenolpyruvate: step 6/7. In terms of biological role, catalyzes the transfer of the enolpyruvyl moiety of phosphoenolpyruvate (PEP) to the 5-hydroxyl of shikimate-3-phosphate (S3P) to produce enolpyruvyl shikimate-3-phosphate and inorganic phosphate. This is 3-phosphoshikimate 1-carboxyvinyltransferase from Salmonella schwarzengrund (strain CVM19633).